Consider the following 413-residue polypeptide: FAD-dependent monooxygenase vrtH (413 aa).

The first 23 residues, 1–23, serve as a signal peptide directing secretion; the sequence is MQRANHTRPVLIIGAGLSGLAIG. N-linked (GlcNAc...) asparagine glycosylation is present at N5. FAD contacts are provided by E37 and A48. N94 carries N-linked (GlcNAc...) asparagine glycosylation. R120 serves as a coordination point for FAD. The N-linked (GlcNAc...) asparagine glycan is linked to N232. The FAD site is built by D327 and G340.

Belongs to the paxM FAD-dependent monooxygenase family. It depends on FAD as a cofactor.

The protein operates within secondary metabolite biosynthesis; terpenoid biosynthesis. In terms of biological role, FAD-dependent monooxygenase; part of the gene cluster that mediates the biosynthesis of viridicatumtoxin, a tetracycline-like fungal meroterpenoid with a unique, fused spirobicyclic ring system. The first step of the pathway is the production of the malonamoyl-CoA starter unit for the polyketide synthase vrtA. The aldolase vrtJ may be involved in the synthesis of the malonamate substrate for malonamoyl-CoA synthetase vrtB. The polyketide synthase vrtA then may utilize the malonamoyl-CoA starter unit, followed by sequential condensation of eight malonyl-CoA units to form the polyketide backbone. The cyclization of the last ring could be mediated by the lactamase-like protein vrtG. The proposed post-PKS tailoring steps are a hydroxylation at C5 catalyzed the cytochrome P450 monooxygenase vrtE, a hydroxylation at C12a catalyzed by VrtH and/or VrtI, and an O-methylation by the O-methyltransferase vrtF. VrtC is then proposed to catalyze the transfer of a geranyl group synthesized by vrtD to the aromatic C ring of the tetracyclic polyketide intermediate of viridicatumtoxin to yield previridicatumtoxin. Finally, the cytochrome P450 monooxygenase vrtK catalyzes the spirocyclization of the geranyl moiety of previridicatumtoxin to afford viridicatumtoxin. The chain is FAD-dependent monooxygenase vrtH from Penicillium aethiopicum.